We begin with the raw amino-acid sequence, 60 residues long: uncharacterized protein (60 aa).

Residues 14–34 (MLFLGTIGLAVVVGGLMAYGY) traverse the membrane as a helical segment. The interval 38-60 (GKTPSSGTSFHTASPSFSSRYRY) is disordered. Residues 40-60 (TPSSGTSFHTASPSFSSRYRY) show a composition bias toward polar residues.

Its subcellular location is the host membrane. This is an uncharacterized protein from Dryophytes versicolor (chameleon treefrog).